The chain runs to 409 residues: Threonine dehydratase-like protein AKTS1-1 (409 aa).

Residues 1–21 (MADYLRQVMPENDSDSEALPR) form a disordered region. Residue Lys111 is modified to N6-(pyridoxal phosphate)lysine. Residues Asn138, 239–243 (GEGSL), and Ser368 contribute to the pyridoxal 5'-phosphate site.

Belongs to the serine/threonine dehydratase family. The cofactor is pyridoxal 5'-phosphate.

Its pathway is mycotoxin biosynthesis. Functionally, threonine dehydratase-like protein; part of the gene clusters that mediate the biosynthesis of the host-selective toxins (HSTs) AK-toxins responsible for Japanese pear black spot disease by the Japanese pear pathotype. AK-toxins are esters of 9,10-epoxy 8-hydroxy 9-methyldecatrienoic acid (EDA). On cellular level, AK-toxins affect plasma membrane of susceptible cells and cause a sudden increase in loss of K(+) after a few minutes of toxin treatment. The acyl-CoA ligase AKT1, the hydrolase AKT2 and enoyl-CoA hydratase AKT3 are all involved in the biosynthesis of the AK-, AF- and ACT-toxin common 9,10-epoxy-8-hydroxy-9-methyl-decatrienoic acid (EDA) structural moiety. Part of the EDA biosynthesis occurs in the peroxisome since these 3 enzymes are localized in peroxisomes. The exact roles of the 3 enzymes, as well as of additional AK-toxin clusters enzymes, including AKT4, AKT6 and AKTS1, have still to be elucidated. The Cytochrome P450 monooxygenase AKT7 on the other side functions to limit production of EDA and AK-toxin, probably via the catalysis of a side reaction of EDA or its precursor. The protein is Threonine dehydratase-like protein AKTS1-1 of Alternaria alternata (Alternaria rot fungus).